The following is a 352-amino-acid chain: MNELELLGPRAYGEALGRAVLKATAEDFQVDEVLDIPLSGDGEHLWLWVEKRGLNTEEAARRLARAAGVQLRTVSYAGLKDRQALTRQWFSIQLPGKADPDLSAAQDDTLQILKSGRHKRKLQRGAHAANGFTLRLTQLDADKDALNQRLETIARQGIPNYFGAQRFGYQGGNLGEARDYAARKALPEQRAVRSRLLSTARSYLFNRVLAARVADGSWQKAQVGDLLAFTDSRSFFPAGVDECSDPRLAILDLHPTGPQWGEGPSPAGGATAALENTVADDESVLRDWLVRAGMEHERRILRLPIGRLTWHYPESDILQLEFVLPPGCFATVLVRELIDLVPVGQTDSSCVF.

Asp81 acts as the Nucleophile in catalysis. Positions 157–303 (GIPNYFGAQR…MEHERRILRL (147 aa)) constitute a TRUD domain.

This sequence belongs to the pseudouridine synthase TruD family.

The enzyme catalyses uridine(13) in tRNA = pseudouridine(13) in tRNA. In terms of biological role, responsible for synthesis of pseudouridine from uracil-13 in transfer RNAs. The polypeptide is tRNA pseudouridine synthase D (Pseudomonas syringae pv. syringae (strain B728a)).